The chain runs to 170 residues: Putative 4-hydroxy-4-methyl-2-oxoglutarate aldolase (170 aa).

Substrate is bound by residues 85 to 88 (GDMI) and R107. D108 contacts a divalent metal cation.

Belongs to the class II aldolase/RraA-like family. As to quaternary structure, homotrimer. A divalent metal cation is required as a cofactor.

It carries out the reaction 4-hydroxy-4-methyl-2-oxoglutarate = 2 pyruvate. The enzyme catalyses oxaloacetate + H(+) = pyruvate + CO2. In terms of biological role, catalyzes the aldol cleavage of 4-hydroxy-4-methyl-2-oxoglutarate (HMG) into 2 molecules of pyruvate. Also contains a secondary oxaloacetate (OAA) decarboxylase activity due to the common pyruvate enolate transition state formed following C-C bond cleavage in the retro-aldol and decarboxylation reactions. The protein is Putative 4-hydroxy-4-methyl-2-oxoglutarate aldolase of Acinetobacter baylyi (strain ATCC 33305 / BD413 / ADP1).